The chain runs to 82 residues: Small ribosomal subunit protein bS16 (82 aa).

This sequence belongs to the bacterial ribosomal protein bS16 family.

This Shigella boydii serotype 18 (strain CDC 3083-94 / BS512) protein is Small ribosomal subunit protein bS16.